Consider the following 440-residue polypeptide: Chromosomal replication initiator protein DnaA (440 aa).

Residues 1-75 (MNPNQILENL…QSGNKASVLI (75 aa)) form a domain I, interacts with DnaA modulators region. The segment at 75–99 (IQAQSAKQSSKSTKIDIAHIKAQST) is domain II. The domain III, AAA+ region stretch occupies residues 100-316 (ILNPSFTFES…GIIISLNAYA (217 aa)). Residues glycine 146, glycine 148, lysine 149, and threonine 150 each contribute to the ATP site. The segment at 317–440 (TILGQEITLE…KNKILVKSQS (124 aa)) is domain IV, binds dsDNA.

Belongs to the DnaA family. Oligomerizes as a right-handed, spiral filament on DNA at oriC.

It localises to the cytoplasm. In terms of biological role, plays an essential role in the initiation and regulation of chromosomal replication. ATP-DnaA binds to the origin of replication (oriC) to initiate formation of the DNA replication initiation complex once per cell cycle. Binds the DnaA box (a 9 base pair repeat at the origin) and separates the double-stranded (ds)DNA. Forms a right-handed helical filament on oriC DNA; dsDNA binds to the exterior of the filament while single-stranded (ss)DNA is stabiized in the filament's interior. The ATP-DnaA-oriC complex binds and stabilizes one strand of the AT-rich DNA unwinding element (DUE), permitting loading of DNA polymerase. After initiation quickly degrades to an ADP-DnaA complex that is not apt for DNA replication. Binds acidic phospholipids. This Campylobacter jejuni subsp. jejuni serotype O:6 (strain 81116 / NCTC 11828) protein is Chromosomal replication initiator protein DnaA.